We begin with the raw amino-acid sequence, 133 residues long: 6,7-dimethyl-8-ribityllumazine synthase (133 aa).

5-amino-6-(D-ribitylamino)uracil contacts are provided by residues Phe-11, 43–45 (AYD), and 67–69 (AIV). A (2S)-2-hydroxy-3-oxobutyl phosphate-binding site is contributed by 72–73 (DT). His-75 acts as the Proton donor in catalysis. 5-amino-6-(D-ribitylamino)uracil is bound at residue Phe-100. Residue Arg-115 participates in (2S)-2-hydroxy-3-oxobutyl phosphate binding.

It belongs to the DMRL synthase family.

The enzyme catalyses (2S)-2-hydroxy-3-oxobutyl phosphate + 5-amino-6-(D-ribitylamino)uracil = 6,7-dimethyl-8-(1-D-ribityl)lumazine + phosphate + 2 H2O + H(+). Its pathway is cofactor biosynthesis; riboflavin biosynthesis; riboflavin from 2-hydroxy-3-oxobutyl phosphate and 5-amino-6-(D-ribitylamino)uracil: step 1/2. Catalyzes the formation of 6,7-dimethyl-8-ribityllumazine by condensation of 5-amino-6-(D-ribitylamino)uracil with 3,4-dihydroxy-2-butanone 4-phosphate. This is the penultimate step in the biosynthesis of riboflavin. This is 6,7-dimethyl-8-ribityllumazine synthase from Halobacterium salinarum (strain ATCC 29341 / DSM 671 / R1).